We begin with the raw amino-acid sequence, 555 residues long: Synaptotagmin-14 (555 aa).

Topologically, residues 1–24 (MAIEGGERTCGVHELICIRKVSPE) are extracellular. Residues 25–47 (AVGFLSAVGVFIVLMLLLFLYIN) traverse the membrane as a helical; Signal-anchor for type III membrane protein segment. At 48 to 555 (KKFCFENVGG…VCRWHALLES (508 aa)) the chain is on the cytoplasmic side. 3 disordered regions span residues 76-97 (YNSYMDRDEPGSSSESEDEALG), 157-179 (TPPLDELQPPPYQDDSGSPHLSC), and 205-258 (CPSE…PEPE). Residues 211–224 (TGHEAESYHNKGYE) are compositionally biased toward basic and acidic residues. 2 C2 domains span residues 260 to 379 (KYGT…SLPV) and 415 to 550 (SVPE…CRWH).

It belongs to the synaptotagmin family. In terms of assembly, homodimer. Can also form heterodimers. In terms of tissue distribution, expressed in heart and testis. Expressed in brain (especially in the cerebellum).

Its subcellular location is the membrane. Functionally, may be involved in the trafficking and exocytosis of secretory vesicles in non-neuronal tissues. Is Ca(2+)-independent. This chain is Synaptotagmin-14 (Syt14), found in Mus musculus (Mouse).